The chain runs to 178 residues: Large ribosomal subunit protein uL6 (178 aa).

It belongs to the universal ribosomal protein uL6 family. In terms of assembly, part of the 50S ribosomal subunit.

In terms of biological role, this protein binds to the 23S rRNA, and is important in its secondary structure. It is located near the subunit interface in the base of the L7/L12 stalk, and near the tRNA binding site of the peptidyltransferase center. The chain is Large ribosomal subunit protein uL6 from Streptococcus pneumoniae (strain JJA).